Consider the following 490-residue polypeptide: MEPEAGPVLYQKLRVWEPSLESEEEEEEISEQLILDASGPHDSSGNKAGRLPGAWAQLVAALLLLAIGFSLAVRQLCSSGASPGALGSGAPPASGHSHRPGVYHHGAIISPAAECSRLGRELFVAGGNIVDAGVGAALCLAVVHPHTTGLGATYWGLFHNSSSGNSTALTSGPAQTLAPGLGLPSALPALHMLHTHFGRLPWPHLLVGPISLAQKGFLVDTSLASALAAQDTKGLCPLLCHANGTPLGPGTQVTNTKLAAVLHKASLAPTPDLSGDALLSLLAEDLGLEGPSVGPRPTLEPALQLPLPQGILFTTPSPSAGPELLELLEASLQSAGPSPAPCPALPQAAAAPRSSVLATVDSSGSVLLLTSSLNSSFGSGHLSPSTGVLLSNLVAESAAGAWACPLIFRDISDDTEVDVLGLVASGTPAAARVMTHALLSHLARPQTPDQQGPTESPRACAQGTLLQVAAHTEHAHVSSVPSGCCPFQGF.

The Cytoplasmic segment spans residues 1–52; it reads MEPEAGPVLYQKLRVWEPSLESEEEEEEISEQLILDASGPHDSSGNKAGRLP. The helical; Signal-anchor for type II membrane protein transmembrane segment at 53 to 73 threads the bilayer; sequence GAWAQLVAALLLLAIGFSLAV. The Extracellular segment spans residues 74-490; that stretch reads RQLCSSGASP…PSGCCPFQGF (417 aa). N160, N165, and N374 each carry an N-linked (GlcNAc...) asparagine glycan.

It belongs to the gamma-glutamyltransferase family. Heterodimer composed of the light and heavy chains. The active site is located in the light chain. Cleaved by autocatalysis into a large and a small subunit and the autocatalytic cleavage is essential to the functional activation of the enzyme.

Its subcellular location is the membrane. The enzyme catalyses an N-terminal (5-L-glutamyl)-[peptide] + an alpha-amino acid = 5-L-glutamyl amino acid + an N-terminal L-alpha-aminoacyl-[peptide]. It carries out the reaction glutathione + H2O = L-cysteinylglycine + L-glutamate. It catalyses the reaction an S-substituted glutathione + H2O = an S-substituted L-cysteinylglycine + L-glutamate. It functions in the pathway sulfur metabolism; glutathione metabolism. Hydrolyzes and transfers gamma-glutamyl moieties from glutathione and other gamma-glutamyl compounds to acceptors. This Bos taurus (Bovine) protein is Glutathione hydrolase 6.